The primary structure comprises 486 residues: N-succinylglutamate 5-semialdehyde dehydrogenase (486 aa).

NAD(+) is bound at residue 220–225 (GSSRTG). Residues E243 and C277 contribute to the active site.

The protein belongs to the aldehyde dehydrogenase family. AstD subfamily.

The catalysed reaction is N-succinyl-L-glutamate 5-semialdehyde + NAD(+) + H2O = N-succinyl-L-glutamate + NADH + 2 H(+). It participates in amino-acid degradation; L-arginine degradation via AST pathway; L-glutamate and succinate from L-arginine: step 4/5. Catalyzes the NAD-dependent reduction of succinylglutamate semialdehyde into succinylglutamate. The polypeptide is N-succinylglutamate 5-semialdehyde dehydrogenase (Shewanella sp. (strain W3-18-1)).